The chain runs to 632 residues: tRNA uridine 5-carboxymethylaminomethyl modification enzyme MnmG (632 aa).

FAD-binding positions include Gly15 to Gly20, Val127, and Ser182. Residue Gly276–Phe290 coordinates NAD(+). Gln373 contacts FAD.

The protein belongs to the MnmG family. As to quaternary structure, homodimer. Heterotetramer of two MnmE and two MnmG subunits. FAD serves as cofactor.

The protein localises to the cytoplasm. In terms of biological role, NAD-binding protein involved in the addition of a carboxymethylaminomethyl (cmnm) group at the wobble position (U34) of certain tRNAs, forming tRNA-cmnm(5)s(2)U34. This Enterococcus faecalis (strain ATCC 700802 / V583) protein is tRNA uridine 5-carboxymethylaminomethyl modification enzyme MnmG.